We begin with the raw amino-acid sequence, 90 residues long: Putative beta-neurotoxin RjAa2f (90 aa).

Positions 1-18 (MKILIFIIASFMLIGVEC) are cleaved as a signal peptide. One can recognise an LCN-type CS-alpha/beta domain in the interval 19 to 89 (KEGYPMGSDG…VWDSKTNKCG (71 aa)). Intrachain disulfides connect cysteine 29–cysteine 88, cysteine 33–cysteine 62, cysteine 40–cysteine 69, and cysteine 44–cysteine 71.

The protein belongs to the long (4 C-C) scorpion toxin superfamily. Sodium channel inhibitor family. Beta subfamily. In terms of tissue distribution, expressed by the venom gland.

The protein localises to the secreted. Beta toxins bind voltage-independently at site-4 of sodium channels (Nav) and shift the voltage of activation toward more negative potentials thereby affecting sodium channel activation and promoting spontaneous and repetitive firing. This Rhopalurus junceus (Caribbean blue scorpion) protein is Putative beta-neurotoxin RjAa2f.